The sequence spans 121 residues: Large ribosomal subunit protein bL12 (121 aa).

Belongs to the bacterial ribosomal protein bL12 family. Homodimer. Part of the ribosomal stalk of the 50S ribosomal subunit. Forms a multimeric L10(L12)X complex, where L10 forms an elongated spine to which 2 to 4 L12 dimers bind in a sequential fashion. Binds GTP-bound translation factors.

Its function is as follows. Forms part of the ribosomal stalk which helps the ribosome interact with GTP-bound translation factors. Is thus essential for accurate translation. The protein is Large ribosomal subunit protein bL12 of Clostridioides difficile (strain 630) (Peptoclostridium difficile).